The chain runs to 235 residues: Segregation and condensation protein A (235 aa).

It belongs to the ScpA family. As to quaternary structure, component of a cohesin-like complex composed of ScpA, ScpB and the Smc homodimer, in which ScpA and ScpB bind to the head domain of Smc. The presence of the three proteins is required for the association of the complex with DNA.

Its subcellular location is the cytoplasm. Participates in chromosomal partition during cell division. May act via the formation of a condensin-like complex containing Smc and ScpB that pull DNA away from mid-cell into both cell halves. This Streptococcus agalactiae serotype III (strain NEM316) protein is Segregation and condensation protein A.